The chain runs to 152 residues: Superoxide dismutase [Cu-Zn] (152 aa).

Cu cation-binding residues include histidine 45, histidine 47, and histidine 62. Cysteine 56 and cysteine 145 are oxidised to a cystine. Zn(2+) is bound by residues histidine 62, histidine 70, histidine 79, and aspartate 82. Residue histidine 119 coordinates Cu cation.

This sequence belongs to the Cu-Zn superoxide dismutase family. Homodimer. Requires Cu cation as cofactor. It depends on Zn(2+) as a cofactor.

Its subcellular location is the cytoplasm. It catalyses the reaction 2 superoxide + 2 H(+) = H2O2 + O2. Functionally, destroys radicals which are normally produced within the cells and which are toxic to biological systems. The protein is Superoxide dismutase [Cu-Zn] (SODCC) of Nicotiana plumbaginifolia (Leadwort-leaved tobacco).